A 513-amino-acid chain; its full sequence is Cytochrome P450 71D445 (513 aa).

The chain crosses the membrane as a helical; Signal-anchor for type II membrane protein span at residues 12–28; sequence SEWAITSTITLLFLILL. Cys-450 is a binding site for heme.

This sequence belongs to the cytochrome P450 family. Requires heme as cofactor. In terms of tissue distribution, expressed in mature seeds.

The protein localises to the membrane. The catalysed reaction is (-)-casbene + reduced [NADPH--hemoprotein reductase] + O2 = 8-hydroxycasbene + oxidized [NADPH--hemoprotein reductase] + H2O + H(+). It carries out the reaction 4-hydroxycasbene + reduced [NADPH--hemoprotein reductase] + O2 = 4,8-dihydroxycasbene + oxidized [NADPH--hemoprotein reductase] + H2O + H(+). The enzyme catalyses 4,8-dihydroxycasbene + reduced [NADPH--hemoprotein reductase] + O2 = 4,5,8-trihydroxycasbene + oxidized [NADPH--hemoprotein reductase] + H2O + H(+). Its pathway is secondary metabolite biosynthesis; terpenoid biosynthesis. Involved in the biosynthesis of macrocyclic lathyrane type diterpenoids (also called Euphorbia factors) natural products, including the cyclization route from casbene to jolkinol C, a precursor for ingenol mebutate that is used to treat actinic keratosis, a precancerous skin condition. Catalyzes the hydroxylation of (-)-casbene and 4-hydroxycasbene to produce 8-hydroxycasbene and 4,8-dihydroxycasbene, respectively. Also mediates the formation of 4-hydroxy-8-ketocasbene from 4,8-dihydroxycasbene. Together with ADH1, triggers the biosynthesis of 8-ketocasbene from 8-hydroxycasbene. This chain is Cytochrome P450 71D445, found in Euphorbia lathyris (Caper spurge).